Consider the following 261-residue polypeptide: Short-chain dehydrogenase/reductase ARMGADRAFT_1018421 (261 aa).

Positions 21, 68, 95, 128, 161, 165, 194, and 196 each coordinate NADP(+). Catalysis depends on Tyr161, which acts as the Proton acceptor. Lys165 serves as the catalytic Lowers pKa of active site Tyr.

It belongs to the short-chain dehydrogenases/reductases (SDR) family.

It functions in the pathway secondary metabolite biosynthesis. Functionally, short-chain dehydrogenase/reductase, part of the gene cluster that mediates the biosynthesis of melleolides, a range of antifungal and phytotoxic polyketide derivatives composed of an orsellinic acid (OA) moiety esterified to various sesquiterpene alcohols. The first step in melleolides biosynthesis is performed by the delta(6)-protoilludene synthase PRO1 which catalyzes the cyclization of farnesyl diphosphate to protoilludene. The orsellinic acid synthase armB produces OA by condensing acetyl-CoA with 3 malonyl-CoA units in a three-round chain elongation reaction folowed by a C2-C7 ring closure. ArmB further catalyzes the trans-esterification of OA to the various sesquiterpene alcohols resulting from the hydroxylation of protoilludene. The melleolides cluster also includes 5 cytochrome P450 monooxygenases, 4 NAD(+)-dependent oxidoreductases, one flavin-dependent oxidoreductase, and one O-methyltransferase. The cytochrome P450 monooxygenases may be involved in protoilludene hydroxylation to elaborate melleolides with multiple alcohol groups, such as melleolide D, which carries alcohol functionalities at C-4, C-5, C-10, and C-13. The role of the NAD(+)-dependent enzymes remains unknown. Numerous melleolides, including arnamial, show 5'-O-methylation of the aromatic moiety which may be catalyzed by the methyltransferase encoded in the cluster. The flavin-dependent oxidoreductase might represent the dehydrogenase yielding the aldehyde in position 1 of arnamial and other melleolides. Finally, several halogenase localized outside of the cluster, are able to catalyze the transfer of a single chlorine atom to the melleolide backbone, resulting in a 6'-chloromelleolide product. The sequence is that of Short-chain dehydrogenase/reductase ARMGADRAFT_1018421 from Armillaria gallica (Bulbous honey fungus).